The following is a 221-amino-acid chain: Charged multivesicular body protein 3 (221 aa).

A lipid anchor (N-myristoyl glycine) is attached at glycine 2. A coiled-coil region spans residues 22 to 54 (KIRKEMRVIDRQIRDIQREEEKVKRSIKDAAKK). 2 important for autoinhibitory function regions span residues 59–64 (VCIILA) and 168–169 (IL). The stretch at 144 to 221 (LEDTLEGMDD…MQSRLAALRS (78 aa)) forms a coiled coil. The segment at 181-221 (PSKVTDLPDPVAIGATAAPEEESEEEEEIEEMQSRLAALRS) is disordered. Residues 199-211 (PEEESEEEEEIEE) are compositionally biased toward acidic residues. The MIT-interacting motif motif lies at 200–210 (EEESEEEEEIE). Interaction with STAMBP stretches follow at residues 202–206 (ESEEE) and 220–221 (RS).

It belongs to the SNF7 family. As to quaternary structure, probable core component of the endosomal sorting required for transport complex III (ESCRT-III). ESCRT-III components are thought to multimerize to form a flat lattice on the perimeter membrane of the endosome. Several assembly forms of ESCRT-III may exist that interact and act sequentially.

Its subcellular location is the cytoplasm. It is found in the cytosol. It localises to the membrane. The protein resides in the endosome. The protein localises to the late endosome membrane. In terms of biological role, probable core component of the endosomal sorting required for transport complex III (ESCRT-III) which is involved in multivesicular bodies (MVBs) formation and sorting of endosomal cargo proteins into MVBs. MVBs contain intraluminal vesicles (ILVs) that are generated by invagination and scission from the limiting membrane of the endosome and mostly are delivered to lysosomes enabling degradation of membrane proteins, such as stimulated growth factor receptors, lysosomal enzymes and lipids. Involved in late stages of cytokinesis. Plays a role in endosomal sorting/trafficking of EGF receptor. In Danio rerio (Zebrafish), this protein is Charged multivesicular body protein 3 (chmp3).